The following is a 163-amino-acid chain: Phosphopantetheine adenylyltransferase (163 aa).

Threonine 10 is a substrate binding site. ATP contacts are provided by residues 10–11 (TF) and histidine 18. Substrate contacts are provided by lysine 42, leucine 74, and arginine 88. ATP-binding positions include 89-91 (GLR), glutamate 99, and 124-130 (NSFISST).

It belongs to the bacterial CoaD family. In terms of assembly, homohexamer. The cofactor is Mg(2+).

The protein localises to the cytoplasm. The catalysed reaction is (R)-4'-phosphopantetheine + ATP + H(+) = 3'-dephospho-CoA + diphosphate. It functions in the pathway cofactor biosynthesis; coenzyme A biosynthesis; CoA from (R)-pantothenate: step 4/5. Reversibly transfers an adenylyl group from ATP to 4'-phosphopantetheine, yielding dephospho-CoA (dPCoA) and pyrophosphate. This is Phosphopantetheine adenylyltransferase from Shewanella baltica (strain OS195).